A 428-amino-acid polypeptide reads, in one-letter code: tRNA(Ile)-lysidine synthase (428 aa).

Residue 28-33 (SGGVDS) coordinates ATP.

Belongs to the tRNA(Ile)-lysidine synthase family.

Its subcellular location is the cytoplasm. The enzyme catalyses cytidine(34) in tRNA(Ile2) + L-lysine + ATP = lysidine(34) in tRNA(Ile2) + AMP + diphosphate + H(+). In terms of biological role, ligates lysine onto the cytidine present at position 34 of the AUA codon-specific tRNA(Ile) that contains the anticodon CAU, in an ATP-dependent manner. Cytidine is converted to lysidine, thus changing the amino acid specificity of the tRNA from methionine to isoleucine. The protein is tRNA(Ile)-lysidine synthase of Streptococcus pyogenes serotype M6 (strain ATCC BAA-946 / MGAS10394).